A 350-amino-acid chain; its full sequence is MLSGKTVKLIVFELLQFACLCIPVFVVMERFASVIRFVKSSDTAYWLVVAASVAYAASVTLFVWVPLKYFMLKTQRFSEVTNWRPVTLAYVILSTLPCFAIIIASSKVQADAAIRFDRLTELPVSLVLFSLICVDIVERIRPLRLTGKASGLDLDLEMPGPVLTHLEQVTSISGHLQANGQDGDASFRSPVSNGSLSGRWEDARTYGLPRTSSSAYLYSHSHSGPFSFLWKRDPRHDLFVSSFMFWLDTVEMVRVAGTNSVFYSGWVFPIYILAYLSLLRVVITPDSPLLALSSILSQDLPFLVVRICLLAVFGYVTPVLYILKNILASISFVYFVFMTKLKLLNRGSMF.

7 helical membrane-spanning segments follow: residues 9–29, 47–67, 85–105, 120–140, 259–279, 302–322, and 325–345; these read LIVF…VVME, LVVA…WVPL, PVTL…IIAS, TELP…VERI, NSVF…LSLL, FLVV…VLYI, and NILA…KLLN.

This sequence belongs to the TMEM236 family.

It localises to the membrane. This is Transmembrane protein 236 (tmem236) from Danio rerio (Zebrafish).